We begin with the raw amino-acid sequence, 1758 residues long: uncharacterized protein (1758 aa).

An N-terminal signal peptide occupies residues 1–12; sequence MCFFLGSRLAYA. The Autotransporter domain maps to 1465 to 1758; the sequence is ENLYNNGMWI…SFILGGNYYF (294 aa).

Its subcellular location is the cell outer membrane. This is an uncharacterized protein from Escherichia coli (strain K12).